The sequence spans 513 residues: Light-independent protochlorophyllide reductase subunit B (513 aa).

D36 provides a ligand contact to [4Fe-4S] cluster. The Proton donor role is filled by D274. A substrate-binding site is contributed by 409 to 410 (GL). Residues 426–457 (DAAGPSHHGGHSPKPQAAEPAPQAAPQPENTG) form a disordered region. Residues 440–454 (PQAAEPAPQAAPQPE) show a composition bias toward low complexity.

It belongs to the ChlB/BchB/BchZ family. As to quaternary structure, protochlorophyllide reductase is composed of three subunits; BchL, BchN and BchB. Forms a heterotetramer of two BchB and two BchN subunits. [4Fe-4S] cluster is required as a cofactor.

The catalysed reaction is chlorophyllide a + oxidized 2[4Fe-4S]-[ferredoxin] + 2 ADP + 2 phosphate = protochlorophyllide a + reduced 2[4Fe-4S]-[ferredoxin] + 2 ATP + 2 H2O. The protein operates within porphyrin-containing compound metabolism; bacteriochlorophyll biosynthesis (light-independent). Its function is as follows. Component of the dark-operative protochlorophyllide reductase (DPOR) that uses Mg-ATP and reduced ferredoxin to reduce ring D of protochlorophyllide (Pchlide) to form chlorophyllide a (Chlide). This reaction is light-independent. The NB-protein (BchN-BchB) is the catalytic component of the complex. The chain is Light-independent protochlorophyllide reductase subunit B from Roseobacter denitrificans (strain ATCC 33942 / OCh 114) (Erythrobacter sp. (strain OCh 114)).